Reading from the N-terminus, the 5538-residue chain is Leashin (5538 aa).

A compositionally biased stretch (gly residues) spans 1-10 (MFRALMGGGR). 22 disordered regions span residues 1–270 (MFRA…SSMG), 286–315 (EVDP…TFGI), 331–365 (LPLP…PHTH), 510–555 (SRDA…KKSS), 596–712 (TESV…DISQ), 800–901 (AATS…FPTG), 913–944 (ALAS…PVPT), 1027–1145 (NRPH…KDSF), 1164–1297 (VLSG…GYRD), 1310–1398 (PTPP…RYVS), 1432–1993 (EDPT…TSVE), 2067–2146 (SELL…VNAF), 2165–2207 (NRLS…SPPA), 2233–3065 (PEAA…SQPI), 3077–3894 (MAEE…EIVS), 3910–4034 (EEKA…DTGL), 4072–4128 (KFKQ…EEPL), 4238–4421 (EAAL…SNQA), 4442–4463 (PRPL…DEND), 4509–4698 (LRRQ…TSNT), 4733–4850 (KTDG…VEQA), and 4910–5052 (ALTV…RHRR). The segment at 1–1100 (MFRALMGGGR…RASGVQLIDR (1100 aa)) is woronin bodies-binding region. Low complexity predominate over residues 14-23 (SRSTTSSSKS). 2 stretches are compositionally biased toward basic and acidic residues: residues 42 to 51 (SRGDDRDRGL) and 89 to 167 (VEHD…ERSR). Residues 299 to 313 (AGTTSEPPKPSNTTF) are compositionally biased toward polar residues. Over residues 334 to 352 (PASPTSPPEPVPTTAPYAP) the composition is skewed to pro residues. Positions 514–523 (PRKHHYRQRR) are enriched in basic residues. A compositionally biased stretch (polar residues) spans 598–607 (SVSTARRSQT). The span at 639-655 (HRSRSRSHSSSRNRRHS) shows a compositional bias: basic residues. A compositionally biased stretch (low complexity) spans 660 to 674 (AAVGAAVGSGAIALA). Residues 682–698 (SRSRSRSRFPRKSKGRK) are compositionally biased toward basic residues. Residues 809–825 (RAGEILVAKETRSRHSD) show a composition bias toward basic and acidic residues. Composition is skewed to low complexity over residues 842–851 (GDQSSSSVSS) and 862–880 (GSDE…GWRW). Residues 881 to 891 (GSKKNKKKKRA) are compositionally biased toward basic residues. 8 stretches are compositionally biased toward basic and acidic residues: residues 1068 to 1091 (LTKE…DAER), 1098 to 1145 (IDRD…KDSF), 1178 to 1198 (SQRR…RGSE), 1207 to 1226 (SKSE…RQPE), 1356 to 1365 (WGEHKTHEYE), 1375 to 1387 (SVDH…REQP), 1447 to 1462 (GRVE…ESKS), and 1478 to 1488 (EEKAPSSRVIE). The segment covering 1506-1516 (QESSEPQTRTS) has biased composition (low complexity). Basic and acidic residues-rich tracts occupy residues 1521 to 1536 (VIDR…DGSR), 1549 to 1559 (GKERDESELRA), and 1572 to 1594 (EELR…DRRS). The segment covering 1639–1648 (KKKRRKRRSK) has biased composition (basic residues). Composition is skewed to basic and acidic residues over residues 1672–1686 (EKLK…EKKA), 1700–1773 (EPVD…QRRE), and 1788–1800 (KSGE…KLSE). Composition is skewed to low complexity over residues 1867–1876 (PAPRSRSRPA) and 1889–1898 (SQSSRRSSIL). Positions 1950 to 1975 (KNSREMRPLWLVERHGPGHGEHKLEE) are enriched in basic and acidic residues. Polar residues-rich tracts occupy residues 1984–1993 (KTSSANTSVE) and 2121–2130 (TPQNNVTAAS). Basic and acidic residues-rich tracts occupy residues 2187 to 2196 (DADRTHKPIA), 2269 to 2279 (VPRDDKRRDSV), and 2307 to 2320 (GENK…KNEN). A compositionally biased stretch (polar residues) spans 2321–2331 (ANDNSQAQTEQ). Basic residues predominate over residues 2344–2355 (AKKKKKKNKKKR). Residues 2358 to 2370 (MDSNTQEPTTPVD) are compositionally biased toward polar residues. The span at 2427 to 2441 (DVEKAIEAPDVRKEL) shows a compositional bias: basic and acidic residues. The segment covering 2449–2461 (APEDTPAEPTAET) has biased composition (low complexity). A compositionally biased stretch (basic residues) spans 2473–2484 (KKSKKKKKKKNK). Over residues 2494–2525 (DPASTETPEASAANSQVVAAEQVESTLETTQP) the composition is skewed to polar residues. Basic and acidic residues-rich tracts occupy residues 2580–2590 (NQAKELPHPEE), 2647–2661 (PEDK…DLKS), and 2677–2691 (ALDK…RPAE). A compositionally biased stretch (low complexity) spans 2719–2734 (EEPTPTAAELETPLSR). Residues 2735-2747 (KNSKKNKKKNKRK) show a composition bias toward basic residues. Positions 2796 to 2812 (DENKGESRDVQAVKEET) are enriched in basic and acidic residues. A compositionally biased stretch (basic residues) spans 2874–2884 (KKKAKKKKNRK). Positions 2885 to 2894 (TANVSESQPE) are enriched in polar residues. Basic residues-rich tracts occupy residues 3003-3013 (KKSKKNKKKKQ) and 3089-3100 (KKTKKEKKKKRQ). Residues 3145–3172 (AIEHAEAAAEHSQEQPNKDVTLHADHSP) show a composition bias toward basic and acidic residues. The segment covering 3248 to 3268 (PAMEGGAAAEELVAVEPDVLE) has biased composition (low complexity). The span at 3293–3303 (ELVNAETTQKT) shows a compositional bias: polar residues. Residues 3329–3341 (SKKKDKKKKKKRQ) are compositionally biased toward basic residues. Basic and acidic residues predominate over residues 3347–3367 (DEQRSSTKEEPTAEFSSDHVP). 2 stretches are compositionally biased toward low complexity: residues 3397–3409 (TQTA…SSAS) and 3422–3435 (ESTQ…AQTA). The span at 3436–3450 (KSKKKAKKDKKKRKS) shows a compositional bias: basic residues. The segment covering 3480–3495 (EGPKPGDKPTSPKDSS) has biased composition (basic and acidic residues). Low complexity predominate over residues 3547–3564 (EEQAVVEETVAPPVVDEA). 2 stretches are compositionally biased toward polar residues: residues 3565–3580 (SQLQ…LWSE) and 3604–3613 (VSPSLENNEG). Basic residues-rich tracts occupy residues 3642–3652 (KSKKNKKKKKR) and 3716–3730 (KAKK…KRQS). Residues 3768–3787 (TFSQETSETISTEAKSSEPS) show a composition bias toward polar residues. Residues 3800–3819 (KENQSHDTEPHGGNDKDLTW) are compositionally biased toward basic and acidic residues. Over residues 3823–3837 (MVSSQVEQQQGTPSD) the composition is skewed to polar residues. Positions 3876–3893 (DRLERSGEEGTRVKKEIV) are enriched in basic and acidic residues. Composition is skewed to polar residues over residues 3915–3925 (ISSQGEDTIQV) and 3965–3980 (KDQF…SQSK). The span at 4010-4020 (TSQDDSVDAVQ) shows a compositional bias: acidic residues. The segment covering 4111 to 4123 (ESRENKFKEKQLA) has biased composition (basic and acidic residues). Over residues 4244-4255 (KNSKKKSKKAKK) the composition is skewed to basic residues. The span at 4328-4345 (LGQTPNMDNQTDDVQSTE) shows a compositional bias: polar residues. The span at 4378–4391 (KLSKKDRRKAKKKS) shows a compositional bias: basic residues. Positions 4392-4406 (AKDAIEPSDEPELRN) are enriched in basic and acidic residues. A septal pore-binding region region spans residues 4495 to 5538 (AIAEFDETAI…SSTMDISNVI (1044 aa)). The span at 4554-4570 (TEQSAGLQAKSVSSQGA) shows a compositional bias: polar residues. Composition is skewed to basic and acidic residues over residues 4574–4591 (IQDD…DQTK) and 4660–4673 (EESH…EKGP). Positions 4940 to 4954 (SSVSSVKSVQSTHSV) are enriched in low complexity. Residues 4966–4988 (RNTSGDLRAASQAQESHGTQPHA) are compositionally biased toward polar residues. Over residues 4989 to 4998 (TPQPPQPPPS) the composition is skewed to pro residues. Positions 5050-5223 (HRRSMQHLQE…QQQIAASLHD (174 aa)) form a coiled coil.

Binds directly or indirectly to the Woronin body major protein hexA.

The protein resides in the cell septum. Functionally, acts as the tether and is essential for anchoring of Woronin bodies at the septal pore. In damaged hyphae, Woronin bodies occlude septal pores in order to separate intact from damaged compartments. The polypeptide is Leashin (Aspergillus fumigatus (strain ATCC MYA-4609 / CBS 101355 / FGSC A1100 / Af293) (Neosartorya fumigata)).